A 236-amino-acid polypeptide reads, in one-letter code: Baculoviral IAP repeat-containing protein 8 (236 aa).

Residues 7-70 (RLITFGTWMY…KWYPGCKYLL (64 aa)) form a BIR repeat. Zn(2+)-binding residues include cysteine 39, cysteine 42, histidine 59, and cysteine 66. An RING-type zinc finger spans residues 189–224 (CKICMDRHIAVVFIPCGHLVTCKQCAEAVDRCPMCS).

Belongs to the IAP family. In terms of assembly, binds to caspase-9. As to expression, testis specific in normal tissues.

It localises to the cytoplasm. In terms of biological role, protects against apoptosis mediated by BAX. In Homo sapiens (Human), this protein is Baculoviral IAP repeat-containing protein 8 (BIRC8).